Consider the following 962-residue polypeptide: Glycine dehydrogenase (decarboxylating) (962 aa).

The residue at position 709 (lysine 709) is an N6-(pyridoxal phosphate)lysine.

This sequence belongs to the GcvP family. In terms of assembly, the glycine cleavage system is composed of four proteins: P, T, L and H. Pyridoxal 5'-phosphate is required as a cofactor.

The enzyme catalyses N(6)-[(R)-lipoyl]-L-lysyl-[glycine-cleavage complex H protein] + glycine + H(+) = N(6)-[(R)-S(8)-aminomethyldihydrolipoyl]-L-lysyl-[glycine-cleavage complex H protein] + CO2. The glycine cleavage system catalyzes the degradation of glycine. The P protein binds the alpha-amino group of glycine through its pyridoxal phosphate cofactor; CO(2) is released and the remaining methylamine moiety is then transferred to the lipoamide cofactor of the H protein. This is Glycine dehydrogenase (decarboxylating) from Shewanella baltica (strain OS155 / ATCC BAA-1091).